Consider the following 510-residue polypeptide: ATP synthase subunit alpha (510 aa).

Residue 169–176 (GDRQTGKT) participates in ATP binding.

The protein belongs to the ATPase alpha/beta chains family. In terms of assembly, F-type ATPases have 2 components, CF(1) - the catalytic core - and CF(0) - the membrane proton channel. CF(1) has five subunits: alpha(3), beta(3), gamma(1), delta(1), epsilon(1). CF(0) has four main subunits: a(1), b(1), b'(1) and c(9-12).

Its subcellular location is the cell inner membrane. It catalyses the reaction ATP + H2O + 4 H(+)(in) = ADP + phosphate + 5 H(+)(out). In terms of biological role, produces ATP from ADP in the presence of a proton gradient across the membrane. The alpha chain is a regulatory subunit. The polypeptide is ATP synthase subunit alpha (Rhodospirillum rubrum (strain ATCC 11170 / ATH 1.1.1 / DSM 467 / LMG 4362 / NCIMB 8255 / S1)).